The primary structure comprises 252 residues: Transcriptional regulatory protein HptR (252 aa).

Residues 3-118 form the Response regulatory domain; the sequence is KVVICDDERI…QLEVILGRLV (116 aa). Asp55 carries the post-translational modification 4-aspartylphosphate. An HTH araC/xylS-type domain is found at 153–250; the sequence is NQIVDQIKQS…QMSPSDYCKQ (98 aa). DNA-binding regions (H-T-H motif) lie at residues 170–191 and 217–240; these read SDLIQHIDVSESYAMRTFKDHV and HYEIADKVGFSEYKMFSYHFKKYL.

Phosphorylated by HptS.

It localises to the cytoplasm. Member of the two-component regulatory system HptS/HptR that regulates genes involved in hexose phosphate transport system in response to changes in extracellular phosphate sources. Activates uhpT expression to facilitate glucose-6-phosphate/G6P utilization by directly binding to its promoter. Antagonizes CcpA-dependent transcription of a subset of CcpA-regulated genes involved in antibiotic susceptibility. The protein is Transcriptional regulatory protein HptR (hptR) of Staphylococcus aureus (strain MRSA252).